A 192-amino-acid polypeptide reads, in one-letter code: 7-methyl-GTP pyrophosphatase (192 aa).

The active-site Proton acceptor is the Asp-69.

Belongs to the Maf family. YceF subfamily. A divalent metal cation serves as cofactor.

Its subcellular location is the cytoplasm. It catalyses the reaction N(7)-methyl-GTP + H2O = N(7)-methyl-GMP + diphosphate + H(+). Nucleoside triphosphate pyrophosphatase that hydrolyzes 7-methyl-GTP (m(7)GTP). May have a dual role in cell division arrest and in preventing the incorporation of modified nucleotides into cellular nucleic acids. The chain is 7-methyl-GTP pyrophosphatase (maf-1) from Pseudomonas syringae pv. tomato (strain ATCC BAA-871 / DC3000).